A 129-amino-acid chain; its full sequence is MNLIALLEQEEIKRLTGDKPVTEFAPGDTVIVSVNVVEGTRKRVQAFEGVVIAKRNRGLNSAFIVRKISSGEAVERTFQLYSPQIASIEVKRRGDVRRAKLYYLRNRSGKSARIKEKLVSKQANHQAQG.

It belongs to the bacterial ribosomal protein bL19 family.

This protein is located at the 30S-50S ribosomal subunit interface and may play a role in the structure and function of the aminoacyl-tRNA binding site. This chain is Large ribosomal subunit protein bL19, found in Bordetella avium (strain 197N).